The sequence spans 145 residues: 3-dehydroquinate dehydratase (145 aa).

The active-site Proton acceptor is Tyr-23. Substrate is bound by residues Asn-75, His-81, and Asp-88. His-101 (proton donor) is an active-site residue. Residues 102–103 (IS) and Arg-112 each bind substrate.

Belongs to the type-II 3-dehydroquinase family. In terms of assembly, homododecamer.

The catalysed reaction is 3-dehydroquinate = 3-dehydroshikimate + H2O. The protein operates within metabolic intermediate biosynthesis; chorismate biosynthesis; chorismate from D-erythrose 4-phosphate and phosphoenolpyruvate: step 3/7. Functionally, catalyzes a trans-dehydration via an enolate intermediate. The chain is 3-dehydroquinate dehydratase from Caldicellulosiruptor saccharolyticus (strain ATCC 43494 / DSM 8903 / Tp8T 6331).